A 255-amino-acid polypeptide reads, in one-letter code: Microfibril-associated glycoprotein 4 (255 aa).

An N-terminal signal peptide occupies residues 1–20 (MEALLVLPLLLLLSAGPCAP). Residues 26 to 28 (RGD) carry the Cell attachment site motif. Residues 32–255 (KSCLQLPLDC…KRTEMKIRRA (224 aa)) form the Fibrinogen C-terminal domain. N-linked (GlcNAc...) asparagine glycans are attached at residues Asn87 and Asn137.

Homodimer. Can also form higher oligomers. Interacts with FBN1, FBN2 and LOX. Interacts with COL1A1 in a Ca (2+)-dependent manner. Interacts with ELN in a Ca (2+)-dependent manner; this interaction promotes ELN self-assembly.

Its subcellular location is the secreted. It is found in the extracellular space. The protein resides in the extracellular matrix. Could be involved in calcium-dependent cell adhesion or intercellular interactions. May contribute to the elastic fiber assembly and/or maintenance. This Bos taurus (Bovine) protein is Microfibril-associated glycoprotein 4 (MFAP4).